We begin with the raw amino-acid sequence, 383 residues long: MTAPAELSPTLQLACDLIRRPSVTPVDADCQAQMMNRLGAVGFELEPMRIEDVDNFWATHGSQDGPVLCFAGHTDVVPTGPVQQWQHEPFEALIDADGMLCGRGAADMKGSLASMVIASERFVQDYPNHRGKVAFLITSDEEGPAHHGTKAVVERLKARNERLDWCIVGEPSSTTLLGDVVKNGRRGSLGAKLTVRGKQGHVAYPHLARNPIHLAAPALAELAAEHWDEGNAFFPPTSFQISNLNSGTGATNVVPGELTALFNFRFSTESTVEGLQARVSAILDKHELDWSIDWALSGLPFLTEPGELLDAVASSIKGVTGRDTQPSTSGGTSDGRFIATMGTQVVELGPVNATIHQVDERILASDLDLLTEIYYQTLVRLLA.

H73 is a Zn(2+) binding site. D75 is a catalytic residue. Position 107 (D107) interacts with Zn(2+). Residue E141 is the Proton acceptor of the active site. E142, E170, and H356 together coordinate Zn(2+).

This sequence belongs to the peptidase M20A family. DapE subfamily. In terms of assembly, homodimer. It depends on Zn(2+) as a cofactor. The cofactor is Co(2+).

The enzyme catalyses N-succinyl-(2S,6S)-2,6-diaminopimelate + H2O = (2S,6S)-2,6-diaminopimelate + succinate. Its pathway is amino-acid biosynthesis; L-lysine biosynthesis via DAP pathway; LL-2,6-diaminopimelate from (S)-tetrahydrodipicolinate (succinylase route): step 3/3. Its function is as follows. Catalyzes the hydrolysis of N-succinyl-L,L-diaminopimelic acid (SDAP), forming succinate and LL-2,6-diaminopimelate (DAP), an intermediate involved in the bacterial biosynthesis of lysine and meso-diaminopimelic acid, an essential component of bacterial cell walls. This chain is Succinyl-diaminopimelate desuccinylase, found in Pseudomonas putida (strain GB-1).